Consider the following 566-residue polypeptide: Arginine--tRNA ligase (566 aa).

The short motif at 121–131 (ANPNGPFHIGH) is the 'HIGH' region element.

Belongs to the class-I aminoacyl-tRNA synthetase family.

It is found in the cytoplasm. The catalysed reaction is tRNA(Arg) + L-arginine + ATP = L-arginyl-tRNA(Arg) + AMP + diphosphate. The protein is Arginine--tRNA ligase of Methanococcus maripaludis (strain C6 / ATCC BAA-1332).